We begin with the raw amino-acid sequence, 336 residues long: L-Ala-D/L-amino acid epimerase (336 aa).

Residues Thr-130 and 152-154 each bind substrate; that span reads KIK. Asp-178, Glu-204, and Asp-229 together coordinate Mg(2+). Residues Lys-251 and 301-303 contribute to the substrate site; that span reads DMD.

This sequence belongs to the mandelate racemase/muconate lactonizing enzyme family. The cofactor is Mg(2+).

In terms of biological role, catalyzes the epimerization of D-Ala-D-Ala to D-Ala-L-Ala. Has broad substrate specificity and catalyzes the epimerization of a variety of dipeptides containing an N-terminal Ala followed by Ser, Thr, Val, Met, His, Phe or Trp (in vitro). This chain is L-Ala-D/L-amino acid epimerase, found in Flavobacterium johnsoniae (strain ATCC 17061 / DSM 2064 / JCM 8514 / BCRC 14874 / CCUG 350202 / NBRC 14942 / NCIMB 11054 / UW101) (Cytophaga johnsonae).